The following is a 399-amino-acid chain: GDP-D-glucose phosphorylase 1 (399 aa).

His-237 (tele-GMP-histidine intermediate) is an active-site residue.

It belongs to the GDPGP1 family.

The protein localises to the cytoplasm. The enzyme catalyses GDP-alpha-D-glucose + phosphate = alpha-D-glucose 1-phosphate + GDP + H(+). Functionally, specific and highly efficient GDP-D-glucose phosphorylase regulating the levels of GDP-D-glucose in cells. This is GDP-D-glucose phosphorylase 1 (gdpgp1) from Xenopus laevis (African clawed frog).